A 147-amino-acid polypeptide reads, in one-letter code: ATP synthase epsilon chain 2 (147 aa).

It belongs to the ATPase epsilon chain family. In terms of assembly, F-type ATPases have 2 components, CF(1) - the catalytic core - and CF(0) - the membrane proton channel. CF(1) has five subunits: alpha(3), beta(3), gamma(1), delta(1), epsilon(1). CF(0) has three main subunits: a, b and c.

It is found in the cell inner membrane. Its function is as follows. Produces ATP from ADP in the presence of a proton gradient across the membrane. This chain is ATP synthase epsilon chain 2, found in Photobacterium profundum (strain SS9).